Here is a 311-residue protein sequence, read N- to C-terminus: Pyrimidine-specific ribonucleoside hydrolase RihA (311 aa).

Residue H240 is part of the active site.

Belongs to the IUNH family. RihA subfamily.

Hydrolyzes with equal efficiency cytidine or uridine to ribose and cytosine or uracil, respectively. This chain is Pyrimidine-specific ribonucleoside hydrolase RihA, found in Escherichia coli O139:H28 (strain E24377A / ETEC).